Here is a 463-residue protein sequence, read N- to C-terminus: Phytase A (463 aa).

Positions 1 to 19 (MAFFTVALSLYYLLSRVST) are cleaved as a signal peptide. Residue asparagine 26 is glycosylated (N-linked (GlcNAc...) asparagine). Cysteine 29 and cysteine 38 form a disulfide bridge. Residue asparagine 41 is glycosylated (N-linked (GlcNAc...) asparagine). 1D-myo-inositol hexakisphosphate contacts are provided by glutamine 48, tyrosine 49, arginine 79, histidine 80, arginine 83, and threonine 86. 4 disulfides stabilise this stretch: cysteine 69–cysteine 410, cysteine 211–cysteine 460, cysteine 260–cysteine 278, and cysteine 431–cysteine 439. Residue histidine 80 is the Nucleophile of the active site. N-linked (GlcNAc...) asparagine glycosylation is found at asparagine 103 and asparagine 118. A 1D-myo-inositol hexakisphosphate-binding site is contributed by arginine 163. Asparagine 203 carries an N-linked (GlcNAc...) asparagine glycan. Residue aspartate 207 participates in 1D-myo-inositol hexakisphosphate binding. Asparagine 226 carries an N-linked (GlcNAc...) asparagine glycan. Lysine 297 lines the 1D-myo-inositol hexakisphosphate pocket. Asparagine 331 and asparagine 335 each carry an N-linked (GlcNAc...) asparagine glycan. 1D-myo-inositol hexakisphosphate contacts are provided by histidine 357 and aspartate 358. Residue asparagine 372 is glycosylated (N-linked (GlcNAc...) asparagine).

It belongs to the histidine acid phosphatase family. In terms of assembly, monomer. Seems to be cleaved into at least two pieces, most likely due to proteases in the supernatant. The N-terminal fragment, called phyB seems to retain phytase activity.

It localises to the secreted. The enzyme catalyses 1D-myo-inositol hexakisphosphate + H2O = 1D-myo-inositol 1,2,4,5,6-pentakisphosphate + phosphate. The catalysed reaction is 1D-myo-inositol 1,2,4,5,6-pentakisphosphate + H2O = 1D-myo-inositol 1,2,5,6-tetrakisphosphate + phosphate. It catalyses the reaction 1D-myo-inositol 1,2,5,6-tetrakisphosphate + H2O = 1D-myo-inositol 1,2,6-trisphosphate + phosphate. It carries out the reaction 1D-myo-inositol 1,2,6-trisphosphate + H2O = 1D-myo-inositol 1,2-bisphosphate + phosphate. The enzyme catalyses 1D-myo-inositol 1,2-bisphosphate + H2O = 1D-myo-inositol 2-phosphate + phosphate. Its function is as follows. Catalyzes the phosphate monoester hydrolysis of phytic acid (myo-inositol hexakisphosphate), which results in the stepwise formation of myo-inositol pentakis-, tetrakis-, tris-, bis-, and monophosphates, as well as the liberation of inorganic phosphate. Myo-inositol 2-monophosphate is the end product. Has a broad substrate specificity and is also able to dephosphorylate other classic acid phosphatase substrates such as p-nitrophenyl phosphate, phenyl phosphate, fructose 1,6-bisphosphate, fructose 6-phosphate, glucose 6-phosphate, ribose 5-phosphate, alpha-glycerophosphate, beta-glycerophosphate, 3-phosphoglycerate, as well as ADP and ATP. This chain is Phytase A, found in Emericella nidulans (strain FGSC A4 / ATCC 38163 / CBS 112.46 / NRRL 194 / M139) (Aspergillus nidulans).